A 436-amino-acid chain; its full sequence is Phaseolin, alpha-type (436 aa).

The signal sequence occupies residues 1–24 (MMRARVPLLLLGILFLASLSASFA). The interval 233–257 (LSKHAKSSSRKSHSKQDNTIGNEFG) is disordered. Positions 236-245 (HAKSSSRKSH) are enriched in basic residues. The region spanning 245 to 396 (HSKQDNTIGN…TFSGSGEEVM (152 aa)) is the Cupin type-1 domain. The N-linked (GlcNAc...) (complex) asparagine; alternate glycan is linked to Asn258. Asn258 is a glycosylation site (N-linked (GlcNAc...) (high mannose) asparagine; alternate). An N-linked (GlcNAc...) (high mannose) asparagine glycan is attached at Asn347. Residues 411-436 (HHHQQEQQKGSHQQEQQKGRKGAFVY) are disordered. Residues 417-426 (QQKGSHQQEQ) are compositionally biased toward low complexity.

This sequence belongs to the 7S seed storage protein family. In terms of assembly, homotrimer. N-glycosylated; glycans consist in Man9(GlcNAc)2 and Man7(GlcNAc)2 when dually glycosylated at Asn-258 and Asn-347, whereas it consists in Xyl-Man3(GlcNAc)2 when solely glycosylated at Asn-258.

It is found in the vacuole. The protein localises to the aleurone grain. Functionally, major seed storage protein. The sequence is that of Phaseolin, alpha-type from Phaseolus vulgaris (Kidney bean).